A 1279-amino-acid polypeptide reads, in one-letter code: Sterol regulatory element-binding protein cleavage-activating protein (1279 aa).

The Cytoplasmic segment spans residues 1-18 (MTLTERLREKISQAFYNH). The chain crosses the membrane as a helical span at residues 19–39 (GLLCASYPIPIILFTGLCILA). Topologically, residues 40–279 (CCYPLLKLPL…SLVHVHFKEE (240 aa)) are lumenal. The segment at 46 to 284 (KLPLPGTGPV…HFKEEIGIAE (239 aa)) is loop-1. Positions 60–81 (PVKDYSPPPSASDHKPGEPSEQ) are disordered. Asparagine 263 is a glycosylation site (N-linked (GlcNAc...) asparagine). The chain crosses the membrane as a helical span at residues 280-300 (IGIAELIPLVTTYIILFAYIY). Positions 284–442 (ELIPLVTTYI…MPFFTTVLSI (159 aa)) constitute an SSD domain. Over 301–312 (FSTRKIDMVKSK) the chain is Cytoplasmic. The helical transmembrane segment at 313–333 (WGLALAAVVTVLSSLLMSVGL) threads the bilayer. Topologically, residues 334–344 (CTLFGLTPTLN) are lumenal. The helical transmembrane segment at 345–365 (GGEIFPYLVVVIGLENVLVLT) threads the bilayer. Topologically, residues 366-401 (KSVVSTPVDLEVKLRIAQGLSSESWSIMKNMATELG) are cytoplasmic. Residues 402–422 (IILIGYFTLVPAIQEFCLFAV) form a helical membrane-spanning segment. Position 423 (valine 423) is a topological domain, lumenal. A helical membrane pass occupies residues 424 to 444 (GLVSDFFLQMPFFTTVLSIDI). The Cytoplasmic portion of the chain corresponds to 445 to 518 (RRMELADLNK…FLARTRLAQR (74 aa)). An ER export signal motif is present at residues 447–452 (MELADL). Residues lysine 454 and lysine 466 each participate in a glycyl lysine isopeptide (Lys-Gly) (interchain with G-Cter in ubiquitin) cross-link. The helical transmembrane segment at 519–539 (LIMAGTVVWIGILAYTDPAGL) threads the bilayer. The loop-7 stretch occupies residues 535–710 (DPAGLRTYLA…QAHRDVTLYK (176 aa)). The Lumenal portion of the chain corresponds to 540-707 (RTYLAAQVTE…GVAQAHRDVT (168 aa)). The tract at residues 588-617 (LENQTLPGEPPEPGGQAEGVHDSPAPEVTW) is disordered. N-linked (GlcNAc...) asparagine glycans are attached at residues asparagine 590 and asparagine 641. Residues 668 to 696 (EGRHPQDSRSAWSPPQPAQGGLWDAGPKG) form a disordered region. The helical transmembrane segment at 708–728 (LYKVAALGLATGILLVLLLCL) threads the bilayer. The Cytoplasmic portion of the chain corresponds to 729 to 1279 (YRVLCPRNYG…YVPSVLEKLD (551 aa)). The segment at 730 to 1279 (RVLCPRNYGQ…YVPSVLEKLD (550 aa)) is interaction with SREBF2. Residues 770-810 (VLRGHLMDIECLASDGMLLVSCCLAGHVCVWDAQTGDCLTR) form a WD 1 repeat. Serine 821, serine 837, serine 843, and serine 850 each carry phosphoserine. Disordered regions lie at residues 834–868 (ERLS…LFGD), 883–903 (HPRL…CRRT), and 925–959 (VPMH…GSPS). Over residues 885 to 896 (RLPELDHPEPRH) the composition is skewed to basic and acidic residues. The span at 929 to 944 (TPAPRPPSPGPTPPQT) shows a compositional bias: pro residues. Serine 936 is subject to Phosphoserine. WD repeat units lie at residues 952–1002 (PPEK…LRCS) and 1005–1042 (EVAS…ALSP). Omega-N-methylarginine is present on arginine 1051. WD repeat units follow at residues 1077 to 1114 (AHQK…CLFT), 1117 to 1155 (GHSG…RVSH), 1158 to 1195 (AHRG…KLYS), and 1197 to 1235 (QQDL…LLQT).

Belongs to the WD repeat SCAP family. As to quaternary structure, membrane region forms a homotetramer. Component of the SCAP-SREBP complex (composed of SCAP and SREBF1/SREBP1 or SREBF2/SREBP2); interacts with SREBF1/SREBP1 or SREBF2/SREBP2 through its C-terminal cytoplasmic domain. Forms a ternary complex with INSIG1 or INSIG2 through its transmembrane domains at high sterol concentrations. Interacts with PAQR3; the interaction anchors the SCAP-SREBP complex to the Golgi apparatus in low cholesterol conditions. Interacts with the SEC23-SEC24 complex in a SAR1-GTP-dependent manner through an ER export signal in its third cytoplasmic loop. Interacts with RNF139; the interaction inhibits the interaction of SCAP with SEC24B and hampering the ER to Golgi transport of the SCAP-SREBP complex. Interacts with SPRING1. Ubiquitinated at Lys-454 and Lys-466. RNF145 triggers ubiquitination of SCAP, likely inhibiting SCAP-SREBP complex transport to the Golgi apparatus and the subsequent processing/maturation of SREBF2/SREBP2. Widely expressed with higher levels in lung, kidney, gut, brain and adipose tissue. As to expression, expressed in liver and muscle. Isoform 3 expressed in testis. In terms of tissue distribution, expressed in testis.

It localises to the endoplasmic reticulum membrane. Its subcellular location is the golgi apparatus membrane. It is found in the cytoplasmic vesicle. The protein resides in the COPII-coated vesicle membrane. Escort protein required for cholesterol as well as lipid homeostasis. Regulates export of the SCAP-SREBP complex from the endoplasmic reticulum to the Golgi upon low cholesterol, thereby regulating the processing of sterol regulatory element-binding proteins (SREBPs) SREBF1/SREBP1 and SREBF2/SREBP2. At high sterol concentrations, formation of a ternary complex with INSIG (INSIG1 or INSIG2) leads to mask the ER export signal in SCAP, promoting retention of the complex in the endoplasmic reticulum. Low sterol concentrations trigger release of INSIG, a conformational change in the SSD domain of SCAP, unmasking of the ER export signal, promoting recruitment into COPII-coated vesicles and transport of the SCAP-SREBP to the Golgi: in the Golgi, SREBPs are then processed, releasing the transcription factor fragment of SREBPs from the membrane, its import into the nucleus and up-regulation of LDLR, INSIG1 and the mevalonate pathway. Binds cholesterol via its SSD domain. The chain is Sterol regulatory element-binding protein cleavage-activating protein from Sus scrofa (Pig).